A 255-amino-acid chain; its full sequence is Aliphatic sulfonates import ATP-binding protein SsuB (255 aa).

The 222-residue stretch at 12–233 (LLLNAVSKHY…RLGSVRLAEL (222 aa)) folds into the ABC transporter domain. 44 to 51 (GRSGGGKS) provides a ligand contact to ATP.

It belongs to the ABC transporter superfamily. Aliphatic sulfonates importer (TC 3.A.1.17.2) family. As to quaternary structure, the complex is composed of two ATP-binding proteins (SsuB), two transmembrane proteins (SsuC) and a solute-binding protein (SsuA).

The protein resides in the cell inner membrane. It catalyses the reaction ATP + H2O + aliphatic sulfonate-[sulfonate-binding protein]Side 1 = ADP + phosphate + aliphatic sulfonateSide 2 + [sulfonate-binding protein]Side 1.. Part of the ABC transporter complex SsuABC involved in aliphatic sulfonates import. Responsible for energy coupling to the transport system. This chain is Aliphatic sulfonates import ATP-binding protein SsuB, found in Escherichia coli O6:H1 (strain CFT073 / ATCC 700928 / UPEC).